Here is a 379-residue protein sequence, read N- to C-terminus: Na(+)/H(+) antiporter NhaA (379 aa).

A run of 12 helical transmembrane segments spans residues 14–34 (AGGI…NTPL), 59–79 (LLMW…GMEV), 95–115 (VFPA…FLVF), 125–145 (GWAI…ALLG), 154–174 (IFLL…IALF), 175–195 (FSHD…AILI), 200–220 (LKIT…ASVL), 221–241 (KSGV…PLNG), 261–281 (FAIL…GMGM), 292–312 (IALG…FVAV), 328–348 (IFAV…LAGL), and 359–379 (VTAL…VLGY).

It belongs to the NhaA Na(+)/H(+) (TC 2.A.33) antiporter family.

The protein resides in the cell inner membrane. It catalyses the reaction Na(+)(in) + 2 H(+)(out) = Na(+)(out) + 2 H(+)(in). Its function is as follows. Na(+)/H(+) antiporter that extrudes sodium in exchange for external protons. In Pasteurella multocida (strain Pm70), this protein is Na(+)/H(+) antiporter NhaA.